A 325-amino-acid chain; its full sequence is Olfactory receptor 6Y1 (325 aa).

The Extracellular portion of the chain corresponds to methionine 1–leucine 30. A glycan (N-linked (GlcNAc...) asparagine) is linked at asparagine 10. Residues leucine 31 to isoleucine 51 form a helical membrane-spanning segment. Over leucine 52–glutamine 59 the chain is Cytoplasmic. The helical transmembrane segment at leucine 60 to threonine 80 threads the bilayer. Residues valine 81–threonine 104 are Extracellular-facing. Cysteine 102 and cysteine 194 are disulfide-bonded. The helical transmembrane segment at glutamine 105–phenylalanine 125 threads the bilayer. The Cytoplasmic segment spans residues aspartate 126–glutamine 144. Residues leucine 145–methionine 165 form a helical membrane-spanning segment. Residues valine 166 to methionine 202 are Extracellular-facing. Residue asparagine 191 is glycosylated (N-linked (GlcNAc...) asparagine). The chain crosses the membrane as a helical span at residues valine 203–serine 222. At tyrosine 223–alanine 242 the chain is on the cytoplasmic side. A helical transmembrane segment spans residues phenylalanine 243–threonine 263. Over tyrosine 264–asparagine 276 the chain is Extracellular. Residues lysine 277–leucine 297 form a helical membrane-spanning segment. The Cytoplasmic segment spans residues arginine 298 to serine 325.

It belongs to the G-protein coupled receptor 1 family.

The protein localises to the cell membrane. Its function is as follows. Odorant receptor. The protein is Olfactory receptor 6Y1 (OR6Y1) of Homo sapiens (Human).